The chain runs to 227 residues: Adapter protein MecA 1 (227 aa).

The protein belongs to the MecA family. Homodimer.

In terms of biological role, enables the recognition and targeting of unfolded and aggregated proteins to the ClpC protease or to other proteins involved in proteolysis. Acts negatively in the development of competence by binding ComK and recruiting it to the ClpCP protease. When overexpressed, inhibits sporulation. Also involved in Spx degradation by ClpC. This chain is Adapter protein MecA 1 (mecA1), found in Bacillus cereus (strain ATCC 14579 / DSM 31 / CCUG 7414 / JCM 2152 / NBRC 15305 / NCIMB 9373 / NCTC 2599 / NRRL B-3711).